We begin with the raw amino-acid sequence, 496 residues long: Lysosomal Pro-X carboxypeptidase (496 aa).

An N-terminal signal peptide occupies residues 1–21 (MGRRALLLLLLSFLAPWTTIA). Residues 22 to 45 (LRPALRALGSLHLPTNPTSLPAVA) constitute a propeptide that is removed on maturation. Residues asparagine 47 and asparagine 101 are each glycosylated (N-linked (GlcNAc...) asparagine). Residue serine 179 is the Charge relay system of the active site. The interval 194-334 (HMVVGALAAS…QNIFQALNVY (141 aa)) is SKS domain. Intrachain disulfides connect cysteine 215-cysteine 372, cysteine 233-cysteine 310, cysteine 264-cysteine 343, and cysteine 364-cysteine 394. N-linked (GlcNAc...) asparagine glycans are attached at residues asparagine 317, asparagine 336, and asparagine 345. Residue asparagine 415 is glycosylated (N-linked (GlcNAc...) asparagine). Catalysis depends on charge relay system residues aspartate 430 and histidine 455.

The protein belongs to the peptidase S28 family. Homodimer.

The protein localises to the lysosome. It catalyses the reaction Cleavage of a -Pro-|-Xaa bond to release a C-terminal amino acid.. Cleaves C-terminal amino acids linked to proline in peptides such as angiotensin II, III and des-Arg9-bradykinin. This cleavage occurs at acidic pH, but enzymatic activity is retained with some substrates at neutral pH. In Pongo abelii (Sumatran orangutan), this protein is Lysosomal Pro-X carboxypeptidase (PRCP).